Reading from the N-terminus, the 182-residue chain is Negative transcriptional regulator PadR (182 aa).

This sequence belongs to the PadR family. As to quaternary structure, homodimer.

It localises to the cytoplasm. PadR repressor activity is inhibited in the presence of phenolic acids, which directly modulate PadR binding to the promoter of padC, leading to the dissociation of PadR from the operator DNA and expression of padC. In the presence of MgCl(2), binding is not altered by phenolic acids. Its function is as follows. Transcriptional regulator involved in the regulation of the metabolism of phenolic acids. In the absence of phenolic acids, represses the expression of padC, which encodes a phenolic acid decarboxylase (PAD) involved in the detoxification of harmful phenolic acids. Acts by binding to the padC promoter region, preventing the transcription of the gene. The chain is Negative transcriptional regulator PadR from Bacillus subtilis (strain 168).